Here is a 394-residue protein sequence, read N- to C-terminus: tRNA-specific 2-thiouridylase MnmA (394 aa).

Residues 30 to 37 (AMSGGVDS) and Leu56 contribute to the ATP site. Cys124 functions as the Nucleophile in the catalytic mechanism. Residues Cys124 and Cys220 are joined by a disulfide bond. Gly148 contributes to the ATP binding site. The interval 170 to 172 (RDQ) is interaction with tRNA. The active-site Cysteine persulfide intermediate is Cys220.

Belongs to the MnmA/TRMU family.

It is found in the cytoplasm. The catalysed reaction is S-sulfanyl-L-cysteinyl-[protein] + uridine(34) in tRNA + AH2 + ATP = 2-thiouridine(34) in tRNA + L-cysteinyl-[protein] + A + AMP + diphosphate + H(+). Catalyzes the 2-thiolation of uridine at the wobble position (U34) of tRNA, leading to the formation of s(2)U34. The protein is tRNA-specific 2-thiouridylase MnmA of Hyphomonas neptunium (strain ATCC 15444).